The sequence spans 377 residues: Guanine nucleotide exchange factor for Rab-3A (377 aa).

Residues 23–57 form a disordered region; it reads WKNLGPSKGNRKSPGGLVEASASWEEAGGEEHPAA. Residues 77 to 128 adopt a coiled-coil conformation; that stretch reads SEFLKEELYKAQKELKLKDEECERLCKVRAQLEQELEELTASLFEEAHKMVR. The interval 167–198 is disordered; the sequence is PASPNRELHPQLLSPTKAGPRKGHSRQKSTSS. Phosphoserine is present on residues serine 169 and serine 180.

It belongs to the SEC2 family. As to quaternary structure, interacts with RAB3A and IHPK1 through the coiled-coil domain. This interaction is competitive. IHPK1 kinase activity is not required for this interaction. In terms of tissue distribution, selectively localized to the brain (at protein level).

Functionally, guanine nucleotide exchange factor (GEF) which may activate RAB3A, a GTPase that regulates synaptic vesicle exocytosis. Promotes the exchange of GDP to GTP, converting inactive GDP-bound Rab proteins into their active GTP-bound form. May also activate RAB8A and RAB8B. This is Guanine nucleotide exchange factor for Rab-3A (Rab3il1) from Rattus norvegicus (Rat).